The sequence spans 308 residues: 3'(2'),5'-bisphosphate nucleotidase 1 (308 aa).

The residue at position 2 (Ala-2) is an N-acetylalanine. The active-site Proton acceptor is Asp-51. Mg(2+) is bound by residues Glu-74, Asp-117, Leu-119, and Asp-120. The active-site Proton acceptor is Thr-122. Residue Thr-122 is modified to Phosphothreonine. The AMP site is built by Thr-195, His-198, Gly-220, and Lys-224. A Phosphoserine modification is found at Ser-240. An N6-succinyllysine modification is found at Lys-244. A Mg(2+)-binding site is contributed by Asp-247.

Belongs to the inositol monophosphatase superfamily. Requires Mg(2+) as cofactor. As to expression, highly expressed in kidney, liver, pancreas and heart. Detected at lower levels in brain, placenta, lung and skeletal muscle.

It catalyses the reaction adenosine 3',5'-bisphosphate + H2O = AMP + phosphate. It carries out the reaction adenosine 2',5'-bisphosphate + H2O = AMP + phosphate. The catalysed reaction is 3'-phosphoadenylyl sulfate + H2O = adenosine 5'-phosphosulfate + phosphate. The enzyme catalyses 1D-myo-inositol 1,4-bisphosphate + H2O = 1D-myo-inositol 4-phosphate + phosphate. It catalyses the reaction 1D-myo-inositol 1,3,4-trisphosphate + H2O = 1D-myo-inositol 3,4-bisphosphate + phosphate. Is very sensitive to inhibition by Li(+) (IC(50)=0.3 mM for hydrolysis of PAP; IC(50)=0.6 mM for hydrolysis of inositol-1,4-bis-phosphate). Is not affected by high Na(+) concentrations. Functionally, phosphatase that converts 3'(2')-phosphoadenosine 5'-phosphate (PAP) to AMP and inositol 1,4-bisphosphate (Ins(1,4)P2) to inositol 4-phosphate. Is also able to hydrolyze adenosine 3'-phosphate 5'-phosphosulfate (PAPS) to adenosine 5'-phosphosulfate (APS). Probably prevents the toxic accumulation of PAP, a compound which inhibits a variety of proteins, including PAPS-utilizing enzymes such as sulfotransferases, and RNA processing enzymes. Could also play a role in inositol recycling and phosphoinositide metabolism. Is not active on 3'-AMP, inositol-1-phosphate and inositol-1,4,5-triphosphate. This chain is 3'(2'),5'-bisphosphate nucleotidase 1 (BPNT1), found in Homo sapiens (Human).